Reading from the N-terminus, the 527-residue chain is Arginine--tRNA ligase (527 aa).

The 'HIGH' region motif lies at Ala-108–His-118.

This sequence belongs to the class-I aminoacyl-tRNA synthetase family. Monomer.

The protein resides in the cytoplasm. The enzyme catalyses tRNA(Arg) + L-arginine + ATP = L-arginyl-tRNA(Arg) + AMP + diphosphate. This chain is Arginine--tRNA ligase, found in Sulfurimonas denitrificans (strain ATCC 33889 / DSM 1251) (Thiomicrospira denitrificans (strain ATCC 33889 / DSM 1251)).